The following is a 214-amino-acid chain: Probable transaldolase (214 aa).

Residue Lys-83 is the Schiff-base intermediate with substrate of the active site.

Belongs to the transaldolase family. Type 3B subfamily.

The protein resides in the cytoplasm. The enzyme catalyses D-sedoheptulose 7-phosphate + D-glyceraldehyde 3-phosphate = D-erythrose 4-phosphate + beta-D-fructose 6-phosphate. It functions in the pathway carbohydrate degradation; pentose phosphate pathway; D-glyceraldehyde 3-phosphate and beta-D-fructose 6-phosphate from D-ribose 5-phosphate and D-xylulose 5-phosphate (non-oxidative stage): step 2/3. In terms of biological role, transaldolase is important for the balance of metabolites in the pentose-phosphate pathway. The polypeptide is Probable transaldolase (Geobacter metallireducens (strain ATCC 53774 / DSM 7210 / GS-15)).